The primary structure comprises 378 residues: Cln5-like protein 1 (378 aa).

An N-terminal signal peptide occupies residues 1–20 (MNKIIIFILFLISILQSVRG). Asn-63, Asn-93, Asn-135, Asn-181, Asn-220, Asn-226, Asn-254, and Asn-280 each carry an N-linked (GlcNAc...) asparagine glycan. The chain crosses the membrane as a helical span at residues 308–328 (WIFIIILLSFTTVYLVGGILI).

Belongs to the CLN5 family.

Its subcellular location is the membrane. The polypeptide is Cln5-like protein 1 (cln5la) (Dictyostelium discoideum (Social amoeba)).